The following is a 4544-amino-acid chain: Prolow-density lipoprotein receptor-related protein 1 (4544 aa).

A signal peptide spans 1 to 19 (MLTPPLLLLLPLLSALVAA). Residues 20–4419 (AIDAPKTCSP…EHVFSQQQPG (4400 aa)) are Extracellular-facing. 2 LDL-receptor class A domains span residues 25–66 (KTCS…ICPQ) and 70–110 (QRCQ…HCRE). 6 disulfides stabilise this stretch: Cys-27–Cys-40, Cys-34–Cys-53, Cys-47–Cys-64, Cys-72–Cys-85, Cys-79–Cys-98, and Cys-92–Cys-108. The region spanning 111 to 149 (LQGNCSRLGCQHHCVPTLDGPTCYCNSSFQLQADGKTCK) is the EGF-like 1 domain. N-linked (GlcNAc...) asparagine glycosylation occurs at Asn-114. Cystine bridges form between Cys-115-Cys-124, Cys-120-Cys-133, Cys-135-Cys-148, Cys-154-Cys-164, Cys-160-Cys-173, and Cys-175-Cys-188. Asn-136 carries N-linked (GlcNAc...) asparagine glycosylation. The 40-residue stretch at 150 to 189 (DFDECSVYGTCSQLCTNTDGSFICGCVEGYLLQPDNRSCK) folds into the EGF-like 2; calcium-binding domain. N-linked (GlcNAc...) asparagine glycosylation is found at Asn-185, Asn-239, and Asn-274. LDL-receptor class B repeat units follow at residues 292 to 334 (GNFY…DPAM), 335 to 378 (GKVF…DLVS), and 379 to 422 (RLVY…FENY). A glycan (N-linked (GlcNAc...) asparagine) is linked at Asn-357. N-linked (GlcNAc...) asparagine glycosylation occurs at Asn-446. An EGF-like 3 domain is found at 474 to 520 (RSHACENDQYGKPGGCSDICLLANSHKARTCRCRSGFSLGSDGKSCK). Disulfide bonds link Cys-478-Cys-493, Cys-489-Cys-504, and Cys-506-Cys-519. LDL-receptor class B repeat units follow at residues 571–613 (GFIY…DWMG), 614–659 (DNLY…DPLN), 660–710 (GWMY…DIPA), and 711–754 (GRLY…HGNY). Asn-729 carries N-linked (GlcNAc...) (complex) asparagine glycosylation. One can recognise an EGF-like 4 domain in the interval 803–843 (GTNKCRVNNGGCSSLCLATPGSRQCACAEDQVLDADGVTCL). Cystine bridges form between Cys-807/Cys-818, Cys-814/Cys-827, Cys-829/Cys-842, Cys-854/Cys-866, Cys-861/Cys-879, Cys-873/Cys-890, Cys-895/Cys-907, Cys-902/Cys-920, Cys-914/Cys-931, Cys-936/Cys-948, Cys-943/Cys-961, Cys-955/Cys-971, Cys-976/Cys-989, Cys-984/Cys-1002, Cys-996/Cys-1011, Cys-1015/Cys-1027, Cys-1022/Cys-1040, Cys-1034/Cys-1051, Cys-1062/Cys-1075, Cys-1069/Cys-1088, Cys-1082/Cys-1097, Cys-1104/Cys-1118, Cys-1112/Cys-1131, Cys-1125/Cys-1140, Cys-1145/Cys-1159, Cys-1152/Cys-1172, Cys-1166/Cys-1182, Cys-1185/Cys-1196, Cys-1192/Cys-1206, Cys-1208/Cys-1221, Cys-1227/Cys-1237, Cys-1233/Cys-1246, and Cys-1248/Cys-1261. 8 LDL-receptor class A domains span residues 852 to 892 (PQCQ…LCHQ), 893 to 933 (HTCP…TCSA), 934 to 973 (RTCP…SCAY), 974 to 1013 (PTCF…GCSH), 1013 to 1053 (HSCS…NCTN), 1060 to 1099 (GGCH…SCEG), 1102 to 1142 (HVCD…NCES), and 1143 to 1182 (LACR…GELC). The Ca(2+) site is built by Trp-871, Asp-874, Asp-876, Asp-878, Asp-884, and Glu-885. Residue Asn-928 is glycosylated (N-linked (GlcNAc...) asparagine). Residues Trp-1032, Asp-1035, Asp-1037, Asp-1039, Asp-1045, and Glu-1046 each coordinate Ca(2+). Asn-1050 is a glycosylation site (N-linked (GlcNAc...) asparagine). Ca(2+)-binding residues include Trp-1080, Asp-1083, Asp-1085, Asp-1087, Asp-1093, and Glu-1094. Asn-1154 and Asn-1155 each carry an N-linked (GlcNAc...) asparagine glycan. EGF-like domains lie at 1183–1222 (DQCS…HTCQ) and 1223–1262 (IQSY…ESCR). Asn-1195 and Asn-1218 each carry an N-linked (GlcNAc...) asparagine glycan. LDL-receptor class B repeat units lie at residues 1309–1355 (SALY…DWIA), 1356–1398 (GNIY…DPRD), 1399–1445 (GILF…DYLE), 1446–1490 (KRIL…YGGE), and 1491–1531 (VYWT…YHPS). The N-linked (GlcNAc...) (complex) asparagine glycan is linked to Asn-1511. An EGF-like 7 domain is found at 1536-1579 (APNPCEANGGQGPCSHLCLINYNRTVSCACPHLMKLHKDNTTCY). Disulfide bonds link Cys-1540–Cys-1553, Cys-1549–Cys-1563, and Cys-1565–Cys-1578. Residues Asn-1558, Asn-1575, Asn-1616, and Asn-1645 are each glycosylated (N-linked (GlcNAc...) asparagine). 4 LDL-receptor class B repeats span residues 1627-1669 (QRVY…DWVS), 1670-1713 (RNLF…HPLR), 1714-1753 (GKLY…DFPE), and 1754-1798 (SKLY…MGDK). Residues Asn-1723, Asn-1733, Asn-1763, and Asn-1825 are each glycosylated (N-linked (GlcNAc...) asparagine). In terms of domain architecture, EGF-like 8 spans 1846–1887 (GTNPCSVNNGDCSQLCLPTSETTRSCMCTAGYSLRSGQQACE). Cystine bridges form between Cys-1850/Cys-1861, Cys-1857/Cys-1871, and Cys-1873/Cys-1886. Residue Asn-1933 is glycosylated (N-linked (GlcNAc...) asparagine). LDL-receptor class B repeat units follow at residues 1934–1976 (DTIY…DWIA), 1977–2019 (GNIY…HPEK), 2020–2063 (GYLF…DYQD), and 2064–2107 (GKLY…FEDF). N-linked (GlcNAc...) asparagine glycosylation occurs at Asn-1995. At Lys-2009 the chain carries N6-acetyllysine. N-linked (GlcNAc...) asparagine glycosylation occurs at Asn-2048. N-linked (GlcNAc...) asparagine glycans are attached at residues Asn-2117 and Asn-2127. The 41-residue stretch at 2155-2195 (GTNVCAVANGGCQQLCLYRGRGQRACACAHGMLAEDGASCR) folds into the EGF-like 9 domain. 3 cysteine pairs are disulfide-bonded: Cys-2159–Cys-2170, Cys-2166–Cys-2180, and Cys-2182–Cys-2194. LDL-receptor class B repeat units lie at residues 2253-2294 (NRIF…HRGW), 2295-2343 (DTLY…DECQ), 2344-2388 (NLMF…DHRA), 2389-2431 (EKLY…YGEH), and 2432-2473 (IFWT…VAND). A glycan (N-linked (GlcNAc...) asparagine) is linked at Asn-2472. The 41-residue stretch at 2478–2518 (ELSPCRINNGGCQDLCLLTHQGHVNCSCRGGRILQDDLTCR) folds into the EGF-like 10 domain. 3 disulfides stabilise this stretch: Cys-2482/Cys-2493, Cys-2489/Cys-2503, and Cys-2505/Cys-2517. N-linked (GlcNAc...) asparagine glycosylation is present at Asn-2502. Residue Asn-2521 is glycosylated (N-linked (GlcNAc...) asparagine). 7 LDL-receptor class A domains span residues 2522–2563 (SSCR…YCNS), 2564–2602 (RRCK…PCNK), 2603–2641 (TACG…NCSA), 2642–2690 (TDCS…DCPG), 2694–2732 (PRCP…HCNK), 2732–2771 (KFCS…HCEG), and 2772–2814 (KTCG…GCLY). Cystine bridges form between Cys-2524–Cys-2537, Cys-2532–Cys-2550, Cys-2544–Cys-2561, Cys-2566–Cys-2578, Cys-2573–Cys-2591, and Cys-2585–Cys-2600. Asn-2539 is a glycosylation site (N-linked (GlcNAc...) asparagine). The N-linked (GlcNAc...) asparagine glycan is linked to Asn-2601. Disulfide bonds link Cys-2605–Cys-2617, Cys-2612–Cys-2630, Cys-2624–Cys-2639, Cys-2644–Cys-2666, Cys-2660–Cys-2679, Cys-2673–Cys-2688, Cys-2696–Cys-2708, Cys-2703–Cys-2721, Cys-2715–Cys-2730, Cys-2734–Cys-2746, Cys-2741–Cys-2759, Cys-2753–Cys-2769, Cys-2774–Cys-2787, Cys-2781–Cys-2800, and Cys-2794–Cys-2812. Asn-2620 and Asn-2638 each carry an N-linked (GlcNAc...) asparagine glycan. N-linked (GlcNAc...) asparagine glycosylation is present at Asn-2815. LDL-receptor class A domains lie at 2816–2855 (STCD…ECEY), 2856–2899 (PTCG…HCTS), and 2902–2940 (HKCN…RGCH). Cystine bridges form between Cys-2818-Cys-2830, Cys-2825-Cys-2843, Cys-2837-Cys-2853, Cys-2858-Cys-2870, Cys-2865-Cys-2884, Cys-2878-Cys-2897, Cys-2904-Cys-2917, Cys-2912-Cys-2930, Cys-2924-Cys-2939, Cys-2944-Cys-2956, Cys-2952-Cys-2965, Cys-2967-Cys-2980, Cys-2986-Cys-2996, Cys-2992-Cys-3005, and Cys-3007-Cys-3021. Asn-2905 is a glycosylation site (N-linked (GlcNAc...) asparagine). The EGF-like 11 domain occupies 2941-2981 (INECLSRKLSGCSQDCEDLKIGFKCRCRPGFRLKDDGRTCA). Residues 2982-3022 (DVDECSTTFPCSQRCINTHGSYKCLCVEGYAPRGGDPHSCK) enclose the EGF-like 12; calcium-binding domain. Residues Asn-3048 and Asn-3089 are each glycosylated (N-linked (GlcNAc...) asparagine). LDL-receptor class B repeat units lie at residues 3069–3113 (QMIY…DWVG), 3114–3156 (GNLY…DVQN), 3157–3200 (GYLY…DYVT), 3201–3243 (ERIY…FEDY), and 3244–3284 (VYWT…FHAL). An N-linked (GlcNAc...) asparagine glycan is attached at Asn-3264. Residues 3290–3331 (PNHPCKVNNGGCSNLCLLSPGGGHKCACPTNFYLGSDGRTCV) enclose the EGF-like 13 domain. Intrachain disulfides connect Cys-3294-Cys-3305, Cys-3301-Cys-3315, and Cys-3317-Cys-3330. LDL-receptor class A domains follow at residues 3332 to 3371 (SNCT…DCPE), 3372 to 3410 (FKCR…NCDI), 3411 to 3450 (HVCL…DCPE), 3451 to 3491 (VTCA…NCTQ), 3492 to 3533 (MTCG…ECDE), 3534 to 3572 (RTCE…SCTP), 3573 to 3611 (RPCS…DCTP), 3611 to 3649 (PRCD…ACGT), 3652 to 3692 (RTCP…ECAR), 3693 to 3733 (FVCP…DCEP), and 3739 to 3778 (THCK…DCSI). Asn-3333 carries N-linked (GlcNAc...) asparagine glycosylation. Cystine bridges form between Cys-3334-Cys-3346, Cys-3341-Cys-3359, Cys-3353-Cys-3369, Cys-3374-Cys-3386, Cys-3381-Cys-3399, Cys-3393-Cys-3408, Cys-3413-Cys-3426, Cys-3420-Cys-3439, Cys-3433-Cys-3448, Cys-3453-Cys-3466, Cys-3460-Cys-3479, Cys-3473-Cys-3489, Cys-3494-Cys-3507, Cys-3501-Cys-3520, Cys-3514-Cys-3531, Cys-3536-Cys-3548, Cys-3543-Cys-3561, Cys-3555-Cys-3570, Cys-3575-Cys-3587, Cys-3582-Cys-3600, Cys-3594-Cys-3609, Cys-3613-Cys-3625, Cys-3620-Cys-3638, Cys-3632-Cys-3647, Cys-3654-Cys-3666, Cys-3661-Cys-3679, Cys-3673-Cys-3690, Cys-3695-Cys-3709, Cys-3703-Cys-3722, Cys-3716-Cys-3731, Cys-3741-Cys-3754, Cys-3749-Cys-3767, Cys-3761-Cys-3776, Cys-3785-Cys-3798, Cys-3792-Cys-3807, Cys-3809-Cys-3822, Cys-3828-Cys-3838, Cys-3834-Cys-3847, and Cys-3849-Cys-3860. An N-linked (GlcNAc...) asparagine glycan is attached at Asn-3488. Residue Asn-3662 is glycosylated (N-linked (GlcNAc...) asparagine). EGF-like domains are found at residues 3781 to 3823 (KLTS…PGCQ) and 3824 to 3861 (DINE…NTCK). An N-linked (GlcNAc...) asparagine glycan is attached at Asn-3788. Asn-3839 carries N-linked (GlcNAc...) asparagine glycosylation. LDL-receptor class B repeat units lie at residues 3912 to 3954 (GRVY…HLNI), 3970 to 4012 (GNVY…DPLR), 4013 to 4056 (GTMY…DYHN), and 4057 to 4101 (ERLY…FEDY). A Recognition site for proteolytical processing motif is present at residues 3940 to 3943 (RHRR). The N-linked (GlcNAc...) asparagine glycan is linked to Asn-3953. Asn-4075 and Asn-4125 each carry an N-linked (GlcNAc...) asparagine glycan. EGF-like domains follow at residues 4147 to 4183 (VTNP…GTCV), 4196 to 4232 (RPGT…DKCE), 4232 to 4268 (ELDQ…PKCT), 4268 to 4304 (TQQV…DRCQ), 4304 to 4340 (QYRQ…SRCE), 4340 to 4375 (EVNK…PSCL), and 4373 to 4409 (SCLT…PRCE). 17 disulfide bridges follow: Cys-4151–Cys-4160, Cys-4156–Cys-4169, Cys-4171–Cys-4182, Cys-4200–Cys-4210, Cys-4204–Cys-4220, Cys-4222–Cys-4231, Cys-4236–Cys-4246, Cys-4240–Cys-4256, Cys-4258–Cys-4267, Cys-4272–Cys-4282, Cys-4276–Cys-4292, Cys-4294–Cys-4303, Cys-4308–Cys-4318, Cys-4312–Cys-4328, Cys-4330–Cys-4339, Cys-4344–Cys-4352, and Cys-4347–Cys-4363. The N-linked (GlcNAc...) asparagine glycan is linked to Asn-4179. Residues Asn-4278 and Asn-4279 are each glycosylated (N-linked (GlcNAc...) asparagine). The N-linked (GlcNAc...) asparagine glycan is linked to Asn-4364. 4 disulfides stabilise this stretch: Cys-4365-Cys-4374, Cys-4377-Cys-4387, Cys-4381-Cys-4397, and Cys-4399-Cys-4408. A helical membrane pass occupies residues 4420–4444 (HIASILIPLLLLLLLVLVAGVVFWY). Residues 4445–4544 (KRRVQGAKGF…PEDEIGDPLA (100 aa)) are Cytoplasmic-facing. Positions 4445-4544 (KRRVQGAKGF…PEDEIGDPLA (100 aa)) are interaction with MAFB. Residue Thr-4460 is modified to Phosphothreonine. Residues 4502-4507 (FTNPVY) carry the NPXY motif motif. Tyr-4507 bears the Phosphotyrosine mark. A phosphoserine mark is found at Ser-4517, Ser-4520, and Ser-4523.

The protein belongs to the LDLR family. Heterodimer of an 85-kDa membrane-bound carboxyl subunit and a non-covalently attached 515-kDa N-terminal subunit. Intracellular domain interacts with MAFB. Found in a complex with PID1/PCLI1, LRP1 and CUBNI. Interacts with SNX17, PID1/PCLI1, PDGF and CUBN. The intracellular domain interacts with SHC1, GULP1 and DAB1. Can weakly interact (via NPXY motif) with DAB2 (via PID domain); the interaction is enhanced by tyrosine phosphorylation of the NPXY motif. Interacts with MDK; promotes neuronal survival. Interacts with LRPAP1; this interaction is followed by rapid internalization. Interacts with uPA/PLAU and PAI1/SERPINE1, either individually or in complex with each other, leading to rapid endocytosis; this interaction is abolished in the presence of LRPAP1/RAP. Also interacts with tPA/PLAT alone or in complex with SERPINE1. Interacts with the urokinase receptor PLAUR; this interaction leads to PLAUR internalization and is impaired in the presence of SORL1. Interacts with PDGFB. Interacts with TAU/MAPT, leading to endocytosis; this interaction is reduced in the presence of LRPAP1/RAP. Interacts with IGFBP3; this interaction mediates cell growth inhibition independently of IGF1. Interacts with ADGRG6. As to quaternary structure, (Microbial infection) Interacts with bacterial exotoxins. In terms of assembly, (Microbial infection) Interacts with Rift valley fever virus (RVFV) glycoprotein N; this interaction facilitates virus entry. Cleaved into a 85 kDa membrane-spanning subunit (LRP-85) and a 515 kDa large extracellular domain (LRP-515) that remains non-covalently associated. Gamma-secretase-dependent cleavage of LRP-85 releases the intracellular domain from the membrane. Post-translationally, the N-terminus is blocked. In terms of processing, phosphorylated on serine and threonine residues. Phosphorylated on tyrosine residues upon stimulation with PDGF. Tyrosine phosphorylation promotes interaction with SHC1. Most abundant in liver, brain and lung.

It is found in the cell membrane. It localises to the membrane. The protein localises to the coated pit. The protein resides in the cytoplasm. Its subcellular location is the nucleus. It is found in the golgi outpost. It localises to the cytoskeleton. The protein localises to the microtubule organizing center. Endocytic receptor involved in endocytosis and in phagocytosis of apoptotic cells. Required for early embryonic development. Involved in cellular lipid homeostasis. Involved in the plasma clearance of chylomicron remnants and activated LRPAP1 (alpha 2-macroglobulin), as well as the local metabolism of complexes between plasminogen activators and their endogenous inhibitors. Acts as an LRPAP1 alpha-2-macroglobulin receptor. Acts as TAU/MAPT receptor and controls the endocytosis of TAU/MAPT as well as its subsequent spread. May modulate cellular events, such as APP metabolism, kinase-dependent intracellular signaling, neuronal calcium signaling as well as neurotransmission. Also acts as a receptor for IGFBP3 to mediate cell growth inhibition. Its function is as follows. (Microbial infection) Functions as a receptor for Pseudomonas aeruginosa exotoxin A. This Homo sapiens (Human) protein is Prolow-density lipoprotein receptor-related protein 1.